A 304-amino-acid chain; its full sequence is MPDTDKGAKPQDDSRLERARILSEALPFMQRYDKRTVVVKYGGHAMGDEELGAEFARDIVLLKQAGLNPIVVHGGGPQIGAMLNRLGIKSEFSGGLRITDKATVEIVEMVLAGSINKQIVAQLNQAGGRAVGLCGKDGNLVVARKVHQKVHDPESNIEKLLDLGFVGEPEKINPEILDVIQKSDIIPVIAPVGVSRDGHTYNINADTVAGAIAAAMGAARLLLLTDVTGVLGKDGKLIEALTVAEAKALMKDGTISGGMIPKLETCIESVEGGVEAVVILDGRVRHAVLLELFTELGAGTLIQK.

Substrate contacts are provided by residues 75-76, R97, and N202; that span reads GG.

The protein belongs to the acetylglutamate kinase family. ArgB subfamily.

The protein localises to the cytoplasm. It carries out the reaction N-acetyl-L-glutamate + ATP = N-acetyl-L-glutamyl 5-phosphate + ADP. The protein operates within amino-acid biosynthesis; L-arginine biosynthesis; N(2)-acetyl-L-ornithine from L-glutamate: step 2/4. Its function is as follows. Catalyzes the ATP-dependent phosphorylation of N-acetyl-L-glutamate. The protein is Acetylglutamate kinase of Parvibaculum lavamentivorans (strain DS-1 / DSM 13023 / NCIMB 13966).